The primary structure comprises 458 residues: Probable asparagine--tRNA ligase, cytoplasmic (458 aa).

Belongs to the class-II aminoacyl-tRNA synthetase family.

It localises to the cytoplasm. The catalysed reaction is tRNA(Asn) + L-asparagine + ATP = L-asparaginyl-tRNA(Asn) + AMP + diphosphate + H(+). The chain is Probable asparagine--tRNA ligase, cytoplasmic from Enterocytozoon bieneusi (strain H348) (Microsporidian parasite).